A 252-amino-acid chain; its full sequence is Phosphate import ATP-binding protein PstB (252 aa).

The ABC transporter domain occupies 6–247; that stretch reads MSIRDLNFYY…PAQKATEDYI (242 aa). 38–45 is a binding site for ATP; sequence GPSGCGKS.

This sequence belongs to the ABC transporter superfamily. Phosphate importer (TC 3.A.1.7) family. In terms of assembly, the complex is composed of two ATP-binding proteins (PstB), two transmembrane proteins (PstC and PstA) and a solute-binding protein (PstS).

Its subcellular location is the cell inner membrane. It carries out the reaction phosphate(out) + ATP + H2O = ADP + 2 phosphate(in) + H(+). In terms of biological role, part of the ABC transporter complex PstSACB involved in phosphate import. Responsible for energy coupling to the transport system. The protein is Phosphate import ATP-binding protein PstB of Psychrobacter cryohalolentis (strain ATCC BAA-1226 / DSM 17306 / VKM B-2378 / K5).